A 158-amino-acid polypeptide reads, in one-letter code: NADH-quinone oxidoreductase subunit B (158 aa).

[4Fe-4S] cluster contacts are provided by Cys37, Cys38, Cys102, and Cys132.

Belongs to the complex I 20 kDa subunit family. As to quaternary structure, NDH-1 is composed of 14 different subunits. Subunits NuoB, C, D, E, F, and G constitute the peripheral sector of the complex. It depends on [4Fe-4S] cluster as a cofactor.

It is found in the cell inner membrane. The catalysed reaction is a quinone + NADH + 5 H(+)(in) = a quinol + NAD(+) + 4 H(+)(out). NDH-1 shuttles electrons from NADH, via FMN and iron-sulfur (Fe-S) centers, to quinones in the respiratory chain. Couples the redox reaction to proton translocation (for every two electrons transferred, four hydrogen ions are translocated across the cytoplasmic membrane), and thus conserves the redox energy in a proton gradient. This Methylobacillus flagellatus (strain ATCC 51484 / DSM 6875 / VKM B-1610 / KT) protein is NADH-quinone oxidoreductase subunit B.